Consider the following 398-residue polypeptide: Acetylornithine aminotransferase (398 aa).

F129 contributes to the pyridoxal 5'-phosphate binding site. A N(2)-acetyl-L-ornithine-binding site is contributed by R132. Pyridoxal 5'-phosphate is bound at residue 214-217; it reads DEVQ. K243 carries the post-translational modification N6-(pyridoxal phosphate)lysine. Residue S271 participates in N(2)-acetyl-L-ornithine binding. T272 serves as a coordination point for pyridoxal 5'-phosphate.

Belongs to the class-III pyridoxal-phosphate-dependent aminotransferase family. ArgD subfamily. In terms of assembly, homodimer. Pyridoxal 5'-phosphate serves as cofactor.

It is found in the cytoplasm. It catalyses the reaction N(2)-acetyl-L-ornithine + 2-oxoglutarate = N-acetyl-L-glutamate 5-semialdehyde + L-glutamate. It participates in amino-acid biosynthesis; L-arginine biosynthesis; N(2)-acetyl-L-ornithine from L-glutamate: step 4/4. This is Acetylornithine aminotransferase from Neisseria meningitidis serogroup B (strain ATCC BAA-335 / MC58).